Here is a 370-residue protein sequence, read N- to C-terminus: Notoamide biosynthesis cluster protein J (370 aa).

The N-terminal stretch at 1–22 (MRIMSIMLHLLATILLSSAVSA) is a signal peptide. N-linked (GlcNAc...) asparagine glycosylation is found at Asn159, Asn167, Asn192, Asn235, Asn282, Asn340, and Asn346.

Its function is as follows. Part of the gene cluster that mediates the biosynthesis of notoamide, a fungal indole alkaloid that belongs to a family of natural products containing a characteristic bicyclo[2.2.2]diazaoctane core. The first step of notoamide biosynthesis involves coupling of L-proline and L-tryptophan by the bimodular NRPS notE, to produce cyclo-L-tryptophan-L-proline called brevianamide F. The reverse prenyltransferase notF then acts as a deoxybrevianamide E synthase and converts brevianamide F to deoxybrevianamide E via reverse prenylation at C-2 of the indole ring leading to the bicyclo[2.2.2]diazaoctane core. Deoxybrevianamide E is further hydroxylated at C-6 of the indole ring, likely catalyzed by the cytochrome P450 monooxygenase notG, to yield 6-hydroxy-deoxybrevianamide E. 6-hydroxy-deoxybrevianamide E is a specific substrate of the prenyltransferase notC for normal prenylation at C-7 to produce 6-hydroxy-7-prenyl-deoxybrevianamide, also called notoamide S. As the proposed pivotal branching point in notoamide biosynthesis, notoamide S can be diverted to notoamide E through an oxidative pyran ring closure putatively catalyzed by either notH cytochrome P450 monooxygenase or the notD FAD-linked oxidoreductase. This step would be followed by an indole 2,3-epoxidation-initiated pinacol-like rearrangement catalyzed by the notB FAD-dependent monooxygenase leading to the formation of notoamide C and notoamide D. On the other hand notoamide S is converted to notoamide T by notH (or notD), a bifunctional oxidase that also functions as the intramolecular Diels-Alderase responsible for generation of (+)-notoamide T. To generate antipodal (-)-notoaminide T, notH' (or notD') in Aspergillus versicolor is expected to catalyze a Diels-Alder reaction leading to the opposite stereochemistry. The remaining oxidoreductase notD (or notH) likely catalyzes the oxidative pyran ring formation to yield (+)-stephacidin A. The FAD-dependent monooxygenase notI is highly similar to notB and is predicted to catalyze a similar conversion from (+)-stephacidin A to (-)-notoamide B via the 2,3-epoxidation of (+)-stephacidin A followed by a pinacol-type rearrangement. Finally, it remains unclear which enzyme could be responsible for the final hydroxylation steps leading to notoamide A and sclerotiamide. The function of notJ in the notoamide biosynthesis has not been determined yet. In Aspergillus sp. (strain MF297-2), this protein is Notoamide biosynthesis cluster protein J.